Reading from the N-terminus, the 110-residue chain is Large ribosomal subunit protein uL24 (110 aa).

It belongs to the universal ribosomal protein uL24 family. As to quaternary structure, part of the 50S ribosomal subunit.

One of two assembly initiator proteins, it binds directly to the 5'-end of the 23S rRNA, where it nucleates assembly of the 50S subunit. Its function is as follows. One of the proteins that surrounds the polypeptide exit tunnel on the outside of the subunit. This Ureaplasma parvum serovar 3 (strain ATCC 27815 / 27 / NCTC 11736) protein is Large ribosomal subunit protein uL24.